We begin with the raw amino-acid sequence, 374 residues long: Lipoyl synthase, mitochondrial (374 aa).

[4Fe-4S] cluster contacts are provided by Cys-101, Cys-106, Cys-112, Cys-132, Cys-136, Cys-139, and Ser-347. The region spanning 117–336 is the Radical SAM core domain; that stretch reads ENGTQTATIM…EERGNDLGFL (220 aa).

Belongs to the radical SAM superfamily. Lipoyl synthase family. Requires [4Fe-4S] cluster as cofactor.

The protein localises to the mitochondrion. It catalyses the reaction [[Fe-S] cluster scaffold protein carrying a second [4Fe-4S](2+) cluster] + N(6)-octanoyl-L-lysyl-[protein] + 2 oxidized [2Fe-2S]-[ferredoxin] + 2 S-adenosyl-L-methionine + 4 H(+) = [[Fe-S] cluster scaffold protein] + N(6)-[(R)-dihydrolipoyl]-L-lysyl-[protein] + 4 Fe(3+) + 2 hydrogen sulfide + 2 5'-deoxyadenosine + 2 L-methionine + 2 reduced [2Fe-2S]-[ferredoxin]. Its pathway is protein modification; protein lipoylation via endogenous pathway; protein N(6)-(lipoyl)lysine from octanoyl-[acyl-carrier-protein]: step 2/2. In terms of biological role, catalyzes the radical-mediated insertion of two sulfur atoms into the C-6 and C-8 positions of the octanoyl moiety bound to the lipoyl domains of lipoate-dependent enzymes, thereby converting the octanoylated domains into lipoylated derivatives. The protein is Lipoyl synthase, mitochondrial of Drosophila pseudoobscura pseudoobscura (Fruit fly).